The sequence spans 1465 residues: DNA polymerase III PolC-type (1465 aa).

One can recognise an Exonuclease domain in the interval 427-583 (YVVFDVETTG…YDAEATGRLL (157 aa)).

It belongs to the DNA polymerase type-C family. PolC subfamily.

Its subcellular location is the cytoplasm. It catalyses the reaction DNA(n) + a 2'-deoxyribonucleoside 5'-triphosphate = DNA(n+1) + diphosphate. Required for replicative DNA synthesis. This DNA polymerase also exhibits 3' to 5' exonuclease activity. This chain is DNA polymerase III PolC-type, found in Streptococcus pyogenes serotype M2 (strain MGAS10270).